Reading from the N-terminus, the 227-residue chain is 7-cyano-7-deazaguanine synthase (227 aa).

Residue 8–18 (FSGGQDSTTCL) participates in ATP binding. Zn(2+) contacts are provided by C187, C196, C199, and C202.

It belongs to the QueC family. Zn(2+) is required as a cofactor.

It carries out the reaction 7-carboxy-7-deazaguanine + NH4(+) + ATP = 7-cyano-7-deazaguanine + ADP + phosphate + H2O + H(+). It functions in the pathway purine metabolism; 7-cyano-7-deazaguanine biosynthesis. Functionally, catalyzes the ATP-dependent conversion of 7-carboxy-7-deazaguanine (CDG) to 7-cyano-7-deazaguanine (preQ(0)). The sequence is that of 7-cyano-7-deazaguanine synthase from Aliivibrio salmonicida (strain LFI1238) (Vibrio salmonicida (strain LFI1238)).